A 487-amino-acid polypeptide reads, in one-letter code: Anthocyanidin 3-O-glucosyltransferase 5 (487 aa).

The active-site Proton acceptor is the H22. H22 contributes to the an anthocyanidin binding site. The active-site Charge relay is D119. UDP-alpha-D-glucose contacts are provided by Q354, H369, W372, N373, S374, and E377. Position 392 (A392) interacts with an anthocyanidin. UDP-alpha-D-glucose is bound by residues E393 and Q394.

It belongs to the UDP-glycosyltransferase family. As to expression, faintly expressed in cotyledons.

The catalysed reaction is an anthocyanidin + UDP-alpha-D-glucose + H(+) = an anthocyanidin 3-O-beta-D-glucoside + UDP. It participates in pigment biosynthesis; anthocyanin biosynthesis. In the presence of other necessary color factors, this glycosylation reaction allows the accumulation of anthocyanin pigments. The protein is Anthocyanidin 3-O-glucosyltransferase 5 (GT5) of Manihot esculenta (Cassava).